Here is a 68-residue protein sequence, read N- to C-terminus: Large ribosomal subunit protein bL32 (68 aa).

Positions 1–20 (MAVPQNRVTRSRRNMRRSHD) are disordered.

It belongs to the bacterial ribosomal protein bL32 family.

This Cereibacter sphaeroides (strain ATCC 17029 / ATH 2.4.9) (Rhodobacter sphaeroides) protein is Large ribosomal subunit protein bL32.